The sequence spans 157 residues: 2-C-methyl-D-erythritol 2,4-cyclodiphosphate synthase (157 aa).

Residues aspartate 9 and histidine 11 each contribute to the a divalent metal cation site. Residues 9 to 11 (DVH) and 35 to 36 (HS) contribute to the 4-CDP-2-C-methyl-D-erythritol 2-phosphate site. An a divalent metal cation-binding site is contributed by histidine 43. Residues 57–59 (DIG), phenylalanine 140, and arginine 143 contribute to the 4-CDP-2-C-methyl-D-erythritol 2-phosphate site.

This sequence belongs to the IspF family. Homotrimer. Requires a divalent metal cation as cofactor.

The catalysed reaction is 4-CDP-2-C-methyl-D-erythritol 2-phosphate = 2-C-methyl-D-erythritol 2,4-cyclic diphosphate + CMP. It participates in isoprenoid biosynthesis; isopentenyl diphosphate biosynthesis via DXP pathway; isopentenyl diphosphate from 1-deoxy-D-xylulose 5-phosphate: step 4/6. Its function is as follows. Involved in the biosynthesis of isopentenyl diphosphate (IPP) and dimethylallyl diphosphate (DMAPP), two major building blocks of isoprenoid compounds. Catalyzes the conversion of 4-diphosphocytidyl-2-C-methyl-D-erythritol 2-phosphate (CDP-ME2P) to 2-C-methyl-D-erythritol 2,4-cyclodiphosphate (ME-CPP) with a corresponding release of cytidine 5-monophosphate (CMP). In Caldicellulosiruptor bescii (strain ATCC BAA-1888 / DSM 6725 / KCTC 15123 / Z-1320) (Anaerocellum thermophilum), this protein is 2-C-methyl-D-erythritol 2,4-cyclodiphosphate synthase.